We begin with the raw amino-acid sequence, 797 residues long: MSDFVPHDLIPDLWDEILRRHWMFLETEESIEKLEERKQLEGCLKEFLCVVQHDRKFFLPETGHVLRRSVLELPDFSAQNAIVAFETISQYANNLFTKPWRKEYRTLKTYSGCFQHDIQSRLLDAEQLFLAMGYRRAAEDTFVLEGPICPDQVTNVSRDAMAAYVECQIMKHIYAGVTAAGYVCTWKDILQFRERYVGGTSTTIKEMVRQLSEKRVRMEQPPMQENTYSNVVSAAPTACGMRSNNVAHHPSSSGTCALHPNGLNEAGKYLPPYPAPPPQQPHLPGPLMTHSRSLDHYQEPQAHLPHRHSFDQQLQQQCQLPHVYEAPYDCLDGLSMGSSASYAAVTGAYNAPGNRYPLPYNISSQLNAPYASPADFYGNGQHTNMYATLGKTGPAHSCDLHRRQPNTSAAAAAALAAMQHRQSTYPPDHHLIDFDERAHLTQHDFGTHDYDPQYAELRGQVQPSMRGNPVAMYATYGGYDLPTTLPQAPPPTGQDMYIYARPVPKSSRMRALAEAGGINSTDKHPRSAEKQSTMDNNRKMHKELKERNSRTAPAKRSGTERDIPTTISDLNSYDSASLDGFVALDSSSSPPLMPKVQEGVGSFESWNYVFKNLERSGYTKDLGDREDLLVQSLDLGSLSITNGGAAPPAEKRREATNPTNGEKARTLDKKSGTGRREAKVVQAPAPSPLPNSSSAGVKKVKSALKTAVVDNRGTGSRQRTGAVPKQPPNVSPQLIVTSPNEWSCSFCTFLNPDTKRICEMCCRSKDFNLEAASAASSSAAAAAASAASVSHASSTCV.

The PUB domain maps to 79-146 (QNAIVAFETI…AAEDTFVLEG (68 aa)). 2 disordered regions span residues 515-570 (AGGI…ISDL) and 638-697 (LSIT…SAGV). Positions 662-679 (EKARTLDKKSGTGRREAK) are enriched in basic and acidic residues. The RanBP2-type zinc-finger motif lies at 735–766 (IVTSPNEWSCSFCTFLNPDTKRICEMCCRSKD).

As to quaternary structure, homomultimer. Binds to dl and msl-1 via their nuclear localization signal (NLS). Also binds to Ran, Ran-like and mbo.

The protein localises to the cytoplasm. Functionally, has an essential role during oogenesis and embryogenesis, perhaps in modulating the levels of nuclear import of additional proteins. Modulates the nuclear import of dorsal (dl), Dif and male specific lethal 1 (msl-1). Negatively regulates nuclear import of dl and controls the accumulation of dl in the nucleus after immune challenge. This is Protein tamozhennic (tamo) from Drosophila melanogaster (Fruit fly).